The following is a 193-amino-acid chain: Thioredoxin M4, chloroplastic (193 aa).

A chloroplast-targeting transit peptide spans 1–82 (MASLLDSVTV…RIACEAQDTT (82 aa)). One can recognise a Thioredoxin domain in the interval 83–192 (AAAVEVPNLS…LEKTIERFLV (110 aa)). Active-site nucleophile residues include cysteine 116 and cysteine 119. Cysteine 116 and cysteine 119 are disulfide-bonded.

It belongs to the thioredoxin family. Plant M-type subfamily.

The protein localises to the plastid. Its subcellular location is the chloroplast stroma. In terms of biological role, thiol-disulfide oxidoreductase involved in the redox regulation of enzyme of the oxidative pentose phosphate pathway. Under reducing conditions, inhibits the glucose-6-phosphate dehydrogenase. The protein is Thioredoxin M4, chloroplastic of Arabidopsis thaliana (Mouse-ear cress).